The chain runs to 360 residues: Phospho-N-acetylmuramoyl-pentapeptide-transferase (360 aa).

A run of 10 helical transmembrane segments spans residues 27–47 (GALF…ISLL), 70–90 (GTPT…ILLW), 98–118 (VWVT…DDYL), 134–154 (LLLE…YSPA), 168–188 (ALLN…VGAG), 199–219 (GLAI…AYLV), 239–259 (LAVV…FNAP), 263–283 (IFMG…IAVA), 288–308 (IVLA…IIQV), and 337–357 (QVVI…LATL).

Belongs to the glycosyltransferase 4 family. MraY subfamily. Mg(2+) is required as a cofactor.

The protein localises to the cell inner membrane. The catalysed reaction is UDP-N-acetyl-alpha-D-muramoyl-L-alanyl-gamma-D-glutamyl-meso-2,6-diaminopimeloyl-D-alanyl-D-alanine + di-trans,octa-cis-undecaprenyl phosphate = di-trans,octa-cis-undecaprenyl diphospho-N-acetyl-alpha-D-muramoyl-L-alanyl-D-glutamyl-meso-2,6-diaminopimeloyl-D-alanyl-D-alanine + UMP. The protein operates within cell wall biogenesis; peptidoglycan biosynthesis. Catalyzes the initial step of the lipid cycle reactions in the biosynthesis of the cell wall peptidoglycan: transfers peptidoglycan precursor phospho-MurNAc-pentapeptide from UDP-MurNAc-pentapeptide onto the lipid carrier undecaprenyl phosphate, yielding undecaprenyl-pyrophosphoryl-MurNAc-pentapeptide, known as lipid I. The polypeptide is Phospho-N-acetylmuramoyl-pentapeptide-transferase (Methylorubrum populi (strain ATCC BAA-705 / NCIMB 13946 / BJ001) (Methylobacterium populi)).